The following is a 342-amino-acid chain: Tetraacyldisaccharide 4'-kinase (342 aa).

Residue 68 to 75 (TVGGTGKT) participates in ATP binding.

The protein belongs to the LpxK family.

It catalyses the reaction a lipid A disaccharide + ATP = a lipid IVA + ADP + H(+). The protein operates within glycolipid biosynthesis; lipid IV(A) biosynthesis; lipid IV(A) from (3R)-3-hydroxytetradecanoyl-[acyl-carrier-protein] and UDP-N-acetyl-alpha-D-glucosamine: step 6/6. Transfers the gamma-phosphate of ATP to the 4'-position of a tetraacyldisaccharide 1-phosphate intermediate (termed DS-1-P) to form tetraacyldisaccharide 1,4'-bis-phosphate (lipid IVA). In Burkholderia cenocepacia (strain HI2424), this protein is Tetraacyldisaccharide 4'-kinase.